A 280-amino-acid chain; its full sequence is Energy-coupling factor transporter ATP-binding protein EcfA1 (280 aa).

The 236-residue stretch at 6-241 (LRTENISFQY…SHMLQEIGLD (236 aa)) folds into the ABC transporter domain. Residue 40 to 47 (GQNGSGKS) participates in ATP binding.

This sequence belongs to the ABC transporter superfamily. Energy-coupling factor EcfA family. Forms a stable energy-coupling factor (ECF) transporter complex composed of 2 membrane-embedded substrate-binding proteins (S component), 2 ATP-binding proteins (A component) and 2 transmembrane proteins (T component).

The protein resides in the cell membrane. Functionally, ATP-binding (A) component of a common energy-coupling factor (ECF) ABC-transporter complex. Unlike classic ABC transporters this ECF transporter provides the energy necessary to transport a number of different substrates. In Bacillus cereus (strain ZK / E33L), this protein is Energy-coupling factor transporter ATP-binding protein EcfA1.